We begin with the raw amino-acid sequence, 79 residues long: Putative defensin-like protein 29 (79 aa).

Residues 1 to 26 form the signal peptide; sequence MASSGKCVFLVFLCMVALLAPSEVHA. 3 disulfide bridges follow: Cys45-Cys65, Cys51-Cys74, and Cys55-Cys76.

It belongs to the DEFL family.

Its subcellular location is the secreted. This chain is Putative defensin-like protein 29, found in Arabidopsis thaliana (Mouse-ear cress).